The following is a 370-amino-acid chain: Histidinol-phosphate aminotransferase 1 (370 aa).

Lys-222 is subject to N6-(pyridoxal phosphate)lysine.

Belongs to the class-II pyridoxal-phosphate-dependent aminotransferase family. Histidinol-phosphate aminotransferase subfamily. In terms of assembly, homodimer. Requires pyridoxal 5'-phosphate as cofactor.

It carries out the reaction L-histidinol phosphate + 2-oxoglutarate = 3-(imidazol-4-yl)-2-oxopropyl phosphate + L-glutamate. The protein operates within amino-acid biosynthesis; L-histidine biosynthesis; L-histidine from 5-phospho-alpha-D-ribose 1-diphosphate: step 7/9. The protein is Histidinol-phosphate aminotransferase 1 of Bacillus cereus (strain ATCC 10987 / NRS 248).